Reading from the N-terminus, the 453-residue chain is Phosphoglucosamine mutase (453 aa).

Residue S110 is the Phosphoserine intermediate of the active site. Mg(2+) contacts are provided by S110, D247, D249, and D251. S110 is modified (phosphoserine).

This sequence belongs to the phosphohexose mutase family. It depends on Mg(2+) as a cofactor. Post-translationally, activated by phosphorylation.

The enzyme catalyses alpha-D-glucosamine 1-phosphate = D-glucosamine 6-phosphate. Functionally, catalyzes the conversion of glucosamine-6-phosphate to glucosamine-1-phosphate. The polypeptide is Phosphoglucosamine mutase (Tropheryma whipplei (strain TW08/27) (Whipple's bacillus)).